Reading from the N-terminus, the 134-residue chain is Nogalonic acid methyl ester cyclase (134 aa).

Gln-95 is a nogalaviketone binding site. Asp-111 (proton donor/acceptor) is an active-site residue.

It belongs to the polyketide cyclase DnrD family. As to quaternary structure, homotetramer. Dimer of dimers.

It catalyses the reaction nogalaviketone = methyl nogalonate. The protein operates within antibiotic biosynthesis. Functionally, involved in the biosynthesis of the aromatic polyketide antibiotic nogalamycin. Catalyzes the formation of nogalaviketone from nogalonic acid methyl ester (NAME), the last ring-closure step in the biosynthesis of nogalamycin. This is Nogalonic acid methyl ester cyclase from Streptomyces nogalater.